We begin with the raw amino-acid sequence, 360 residues long: Cytochrome b-c1 complex subunit 2, mitochondrial (360 aa).

Residues 1-15 (MLSSRLQFAQQTARK) constitute a mitochondrion transit peptide.

It belongs to the peptidase M16 family. UQCRC2/QCR2 subfamily. As to quaternary structure, component of the ubiquinol-cytochrome c oxidoreductase (cytochrome b-c1 complex, complex III, CIII), a multisubunit enzyme composed of 3 respiratory subunits cytochrome b, cytochrome c1 and Rieske protein, 2 core protein subunits, and additional low-molecular weight protein subunits. The complex exists as an obligatory dimer and forms supercomplexes (SCs) in the inner mitochondrial membrane with cytochrome c oxidase (complex IV, CIV).

The protein resides in the mitochondrion inner membrane. Its function is as follows. Component of the ubiquinol-cytochrome c oxidoreductase, a multisubunit transmembrane complex that is part of the mitochondrial electron transport chain which drives oxidative phosphorylation. The respiratory chain contains 3 multisubunit complexes succinate dehydrogenase (complex II, CII), ubiquinol-cytochrome c oxidoreductase (cytochrome b-c1 complex, complex III, CIII) and cytochrome c oxidase (complex IV, CIV), that cooperate to transfer electrons derived from NADH and succinate to molecular oxygen, creating an electrochemical gradient over the inner membrane that drives transmembrane transport and the ATP synthase. The cytochrome b-c1 complex catalyzes electron transfer from ubiquinol to cytochrome c, linking this redox reaction to translocation of protons across the mitochondrial inner membrane, with protons being carried across the membrane as hydrogens on the quinol. In the process called Q cycle, 2 protons are consumed from the matrix, 4 protons are released into the intermembrane space and 2 electrons are passed to cytochrome c. This is Cytochrome b-c1 complex subunit 2, mitochondrial (QCR2) from Kluyveromyces lactis (strain ATCC 8585 / CBS 2359 / DSM 70799 / NBRC 1267 / NRRL Y-1140 / WM37) (Yeast).